The primary structure comprises 330 residues: tRNA pseudouridine synthase B (330 aa).

Aspartate 42 (nucleophile) is an active-site residue.

It belongs to the pseudouridine synthase TruB family. Type 1 subfamily.

It carries out the reaction uridine(55) in tRNA = pseudouridine(55) in tRNA. In terms of biological role, responsible for synthesis of pseudouridine from uracil-55 in the psi GC loop of transfer RNAs. The chain is tRNA pseudouridine synthase B from Lactococcus lactis subsp. cremoris (strain SK11).